The sequence spans 1166 residues: UDP-N-acetylglucosamine transferase subunit ALG13 (1166 aa).

Positions 1 to 125 (MKRAFVTVGT…LHKEGHLFYC (125 aa)) are glycosyltransferase activity. Residues 126 to 394 (TCRVLSCPAP…GSRRNKHHAL (269 aa)) form a deubiquitinase activity region. Residues 225–346 (LFRKVVAKDA…NGHYDSVYSK (122 aa)) form the OTU domain. Aspartate 233 functions as the For deubiquitinase activity in the catalytic mechanism. Cysteine 236 (nucleophile; for deubiquitinase activity) is an active-site residue. The active-site For deubiquitinase activity is histidine 339. Residues 393–438 (ALTASVEGSSDQKSSTEDRTEEAAACSSAASTPEGNKQGTERQKVP) form a disordered region. Residues 486–546 (YYFLGDKCQV…RPVNQVALLP (61 aa)) enclose the Tudor domain. Composition is skewed to pro residues over residues 921 to 930 (PPPLPPPPPA), 941 to 957 (PLPPPPPPPPPPPPPYS), and 1004 to 1034 (QPQPQPQPQPQPQPQPQPQPQQPQQQQPPPQ). Disordered stretches follow at residues 921 to 966 (PPPL…SDLP) and 998 to 1056 (QQQL…EQPL).

Belongs to the glycosyltransferase 28 family. As to quaternary structure, forms with ALG14 the active heterodimeric UDP-N-acetylglucosamine transferase complex. Not able to interact with ALG14 to form an active UDP-N-acetylglucosamine transferase complex.

It is found in the endoplasmic reticulum membrane. It catalyses the reaction an N-acetyl-alpha-D-glucosaminyl-diphospho-di-trans,poly-cis-dolichol + UDP-N-acetyl-alpha-D-glucosamine = an N,N'-diacetylchitobiosyl-diphospho-di-trans,poly-cis-dolichol + UDP + H(+). It participates in protein modification; protein glycosylation. Catalytic subunit of the UDP-N-acetylglucosamine transferase complex that operates in the biosynthetic pathway of dolichol-linked oligosaccharides, the glycan precursors employed in protein asparagine (N)-glycosylation. The assembly of dolichol-linked oligosaccharides begins on the cytosolic side of the endoplasmic reticulum membrane and finishes in its lumen. The sequential addition of sugars to dolichol pyrophosphate produces dolichol-linked oligosaccharides containing fourteen sugars, including two GlcNAcs, nine mannoses and three glucoses. Once assembled, the oligosaccharide is transferred from the lipid to nascent proteins by oligosaccharyltransferases. On the cytoplasmic face of the endoplasmic reticulum, the dimeric ALG13/ALG14 complex catalyzes the second step of dolichol pyrophosphate biosynthesis, transferring a beta1,4-linked N-acetylglucosamine (GlcNAc) from UDP-GlcNAc to GlcNAc-pyrophosphatedolichol (Gn-PDol) to produce N,N'-diacetylchitobiosyl diphosphodolichol. N,N'-diacetylchitobiosyl diphosphodolichol is a substrate for ALG1, the following enzyme in the biosynthetic pathway. Its function is as follows. No glycosyltransferase or deubiquitinase activity is detected for this potential multifunctional enzyme. The chain is UDP-N-acetylglucosamine transferase subunit ALG13 from Mus musculus (Mouse).